A 148-amino-acid chain; its full sequence is Small ribosomal subunit protein eS6 (148 aa).

Belongs to the eukaryotic ribosomal protein eS6 family.

The protein is Small ribosomal subunit protein eS6 of Pyrobaculum neutrophilum (strain DSM 2338 / JCM 9278 / NBRC 100436 / V24Sta) (Thermoproteus neutrophilus).